A 590-amino-acid chain; its full sequence is Probable lysine-specific demethylase 4B (590 aa).

Residues 9 to 51 (IKVFRPTWEEFKDFPKYVAYMESQGAHKAGLAKVVPPPEWVPR) form the JmjN domain. Y130 lines the 2-oxoglutarate pocket. One can recognise a JmjC domain in the interval 140-306 (DTDQDSWNIN…YGKRAVQCTC (167 aa)). The Fe cation site is built by H186 and E188. 2-oxoglutarate is bound by residues N196 and K204. 2 residues coordinate Zn(2+): C232 and H238. A 2-oxoglutarate-binding site is contributed by K239. H274 is a binding site for Fe cation. 2 residues coordinate Zn(2+): C304 and C306. 2 disordered regions span residues 372–395 (PTKA…QNPN) and 417–590 (ATDE…TASP). The span at 445–458 (EYIDDGTEDDDEEE) shows a compositional bias: acidic residues. The span at 480 to 494 (SKRKTNSRNNRGRSP) shows a compositional bias: basic residues. 2 stretches are compositionally biased toward low complexity: residues 502 to 513 (ISPASSTSSTSR) and 537 to 571 (TTSP…TPPA).

This sequence belongs to the JHDM3 histone demethylase family. It depends on Fe(2+) as a cofactor.

The protein resides in the nucleus. It catalyses the reaction N(6),N(6),N(6)-trimethyl-L-lysyl(9)-[histone H3] + 2 2-oxoglutarate + 2 O2 = N(6)-methyl-L-lysyl(9)-[histone H3] + 2 formaldehyde + 2 succinate + 2 CO2. Its function is as follows. Probable histone demethylase that specifically demethylates 'Lys-9' and 'Lys-36' residues of histone H3, thereby playing a central role in histone code. Demethylation of Lys residue generates formaldehyde and succinate. This is Probable lysine-specific demethylase 4B (Kdm4B) from Drosophila melanogaster (Fruit fly).